A 562-amino-acid chain; its full sequence is MDDTEYGRFVDWDKMEGGGQEQSTKVLSCTDFQDLKQMARQGHWAKSHSLRAKVYQKLIKEIPCRTVTPDASVYRDIVGKIVGKRPASSLPLPEFVDDRQIPSYCLNSEGIGAVRKIITCISNQFPDISFCPALPSLVALLLHYSQDEAECFENVSRILACNDPNRRLVDQTFLAFESSCMTFGDLAGKYCQGPHKLMVAVSEDVLEVYSDWQRWIFGELPFAYITRVFDVFLVEGYKVLFRVALALLKFFHKVRGGQPMESNNVKRDIQMFVRDLNQCVAPEKLLEKAFAIRLFSRKEIQLLQMANEKALQQKGITVKQKRQNVHLAVHAENFKSEIVSVKEMRDIWSWIPERFALSQPLLLYTNREHGNSLSRFYLHCEGHEPTLLLIKTTNQEVCGAFLSTDWSERRRSGNKLSFFGTGECFVFRLQPEVERYEWVVIKHPELGKVNASSGDNDANSSQSAKDGIDPSDRLSPFLATRHFNLPSKSASMFMAGSTDCIIIGGGDGQALYFDSDLNYGRTSHCNTFNNQPLCSETFQISIIEVWGFKDNVNNDGAHSALP.

Residues Lys-36, Arg-40, Lys-238, Arg-242, and 293–297 (RLFSR) contribute to the a 1,2-diacyl-sn-glycero-3-phospho-(1D-myo-inositol) site. One can recognise a Rab-GAP TBC domain in the interval 42-259 (GHWAKSHSLR…FFHKVRGGQP (218 aa)). Residues 337–549 (EIVSVKEMRD…ISIIEVWGFK (213 aa)) enclose the TLDc domain. Low complexity predominate over residues 451 to 464 (ASSGDNDANSSQSA). The segment at 451-471 (ASSGDNDANSSQSAKDGIDPS) is disordered.

Interacts with ARF6.

It localises to the cell membrane. It is found in the cytoplasm. The protein resides in the cytoplasmic vesicle membrane. The protein localises to the presynapse. Its function is as follows. May act as a GTPase-activating protein for Rab family protein(s). Involved in neuronal projections development, probably through a negative modulation of ARF6 function. Involved in the regulation of synaptic vesicle trafficking. The chain is TBC1 domain family member 24 (tbc1d24) from Xenopus tropicalis (Western clawed frog).